Reading from the N-terminus, the 122-residue chain is Acidic phospholipase A2 (122 aa).

Disulfide bonds link Cys26–Cys115, Cys28–Cys44, Cys43–Cys95, Cys49–Cys122, Cys50–Cys88, Cys57–Cys81, and Cys75–Cys86. 3 residues coordinate Ca(2+): Tyr27, Gly29, and Gly31. The active site involves His47. Asp48 lines the Ca(2+) pocket. The active site involves Asp89.

May form tetramers. Ca(2+) serves as cofactor. As to expression, expressed by the venom gland.

It localises to the secreted. The enzyme catalyses a 1,2-diacyl-sn-glycero-3-phosphocholine + H2O = a 1-acyl-sn-glycero-3-phosphocholine + a fatty acid + H(+). Functionally, PLA2 catalyzes the calcium-dependent hydrolysis of the 2-acyl groups in 3-sn-phosphoglycerides. In vivo, is non-lethal to mice when intravenously injected up to a concentration of 30 ug, however does show significant edematogenic activity at the injection site. This is Acidic phospholipase A2 from Lachesis acrochorda (Chocoan bushmaster).